The primary structure comprises 338 residues: Short-chain dehydrogenase/reductase phmF (338 aa).

NADP(+)-binding residues include Leu-46, Arg-71, Asp-96, and Asn-123. The Proton donor role is filled by Ser-177. Residues Tyr-211 and Lys-215 each coordinate NADP(+). Tyr-211 serves as the catalytic Proton acceptor. Lys-215 acts as the Lowers pKa of active site Tyr in catalysis.

The protein belongs to the short-chain dehydrogenases/reductases (SDR) family.

It participates in mycotoxin biosynthesis. In terms of biological role, short-chain dehydrogenase/reductase; part of the gene cluster that mediates the biosynthesis of the mycotoxins phomacins, leucine-derived cytochalasans with potent actin polymerization-inhibitory activities and monocot-specific antigerminative activities. The first step in the pathway is catalyzed by the hybrid PKS-NRPS phmA, assisted by the enoyl reductase phmE, that are responsible for fusion of the leucine precursor and the polyketide backbone to produce a 2-pyrrolidone intermediate. The polyketide synthase module (PKS) of phmA is responsible for the synthesis of the polyketide backbone and the downstream nonribosomal peptide synthetase (NRPS) amidates the carboxyl end of the polyketide with the leucine precursor. Because phmA lacks a designated enoylreductase (ER) domain, the required activity is provided the enoyl reductase phmE. Reduction by the hydrolyase phmG, followed by dehydration and intra-molecular Diels-Alder cyclization by the Diels-Alderase phmD then yield the required isoindolone-fused macrocycle. A number of oxidative steps catalyzed by the tailoring cytochrome P450 monooxygenase phmB, the FAD-linked oxidoreductase phmC and the short-chain dehydrogenase/reductase phmF, are further required to afford the final products, phomacin D and phomacin E. This Phaeosphaeria nodorum (strain SN15 / ATCC MYA-4574 / FGSC 10173) (Glume blotch fungus) protein is Short-chain dehydrogenase/reductase phmF.